The chain runs to 345 residues: UPF0324 membrane protein RB0971 (345 aa).

10 helical membrane passes run 13–32, 42–61, 93–115, 130–152, 161–183, 193–215, 228–247, 262–284, 291–310, and 320–342; these read SLSVVLSTYGPGLLVTAAVA, YGAPAMLMALLLGIAFHFLA, LLIGLGGGTILLLVSAIVATILF, ALLTSGAVAICGASAAMAIAAVL, NLIFTVLSVTVLSTLAMIGYPIV, ATGIFFGGTIHDVAQVVGAGFSV, LIRVTMLAPVVLIFSLVLRS, VPGFVLAFLVLAGFNSAGLVPVL, AISRWALLAGIVAVGMKTSL, and AVALVVAETLFIAVFILAGMYYL.

Belongs to the UPF0324 family.

The protein resides in the cell membrane. This chain is UPF0324 membrane protein RB0971, found in Rhizobium meliloti (strain 1021) (Ensifer meliloti).